A 912-amino-acid polypeptide reads, in one-letter code: uncharacterized protein (912 aa).

Basic and acidic residues-rich tracts occupy residues 20-32 (IERL…AEPA) and 39-67 (HEYE…EDKT). Residues 20-91 (IERLREQGRA…KPTLPQPETD (72 aa)) form a disordered region. Positions 68 to 77 (RHKKLKHRSR) are enriched in basic residues.

This is an uncharacterized protein from Penicillium chrysogenum virus (isolate Caston/2003) (PcV).